The following is a 221-amino-acid chain: UPF0319 protein CGSHiEE_03630 (221 aa).

The signal sequence occupies residues 1 to 21; the sequence is MKLRAVVLGLATLCTSTATFA.

The protein belongs to the UPF0319 family.

This chain is UPF0319 protein CGSHiEE_03630, found in Haemophilus influenzae (strain PittEE).